Reading from the N-terminus, the 80-residue chain is Phycocyanin-645 alpha-1 chain (80 aa).

R16 contributes to the (2R,3E)-phycocyanobilin binding site. Residues C18, Q24, Y25, and K40 each contribute to the mesobiliverdin site. The 15,16-dihydrobiliverdin site is built by P71 and I73.

This sequence belongs to the phycoerythrin family. As to quaternary structure, heterotetramer of 2 different alpha chains and 2 identical beta chains which form 2 alpha-beta heterodimers within the heterotetramer. In terms of processing, contains one phycocyanobilin chromophore, one mesobiliverdin chromophore and one 15,16-dihydrobiliverdin chromophore with binding mediated by both the alpha and beta subunits.

Its subcellular location is the plastid. It localises to the chloroplast thylakoid membrane. Functionally, light-harvesting photosynthetic tetrapyrrole chromophore-protein from the phycobiliprotein complex. This chain is Phycocyanin-645 alpha-1 chain, found in Chroomonas sp.